Here is a 209-residue protein sequence, read N- to C-terminus: Octanoyltransferase (209 aa).

In terms of domain architecture, BPL/LPL catalytic spans 30 to 209; sequence DHEPEIIYLV…IQTEFNKIFK (180 aa). Substrate-binding positions include 69–76, 143–145, and 156–158; these read RGGKFTFH, AIG, and GVA. Cys-174 serves as the catalytic Acyl-thioester intermediate.

Belongs to the LipB family.

It localises to the cytoplasm. The catalysed reaction is octanoyl-[ACP] + L-lysyl-[protein] = N(6)-octanoyl-L-lysyl-[protein] + holo-[ACP] + H(+). The protein operates within protein modification; protein lipoylation via endogenous pathway; protein N(6)-(lipoyl)lysine from octanoyl-[acyl-carrier-protein]: step 1/2. Its function is as follows. Catalyzes the transfer of endogenously produced octanoic acid from octanoyl-acyl-carrier-protein onto the lipoyl domains of lipoate-dependent enzymes. Lipoyl-ACP can also act as a substrate although octanoyl-ACP is likely to be the physiological substrate. In Rickettsia peacockii (strain Rustic), this protein is Octanoyltransferase.